Reading from the N-terminus, the 232-residue chain is 26.5 kDa heat shock protein, mitochondrial (232 aa).

The transit peptide at 1-42 directs the protein to the mitochondrion; sequence MALARLALRNLQQKLSPSLMGQSCERGLVGNRHNPMKLNRFM. The segment at 44–82 is disordered; that stretch reads TSAGEQEDKMNTEVSVSEKKSPRQNFPRRRGRKSLWRNT. The segment covering 49–64 has biased composition (basic and acidic residues); the sequence is QEDKMNTEVSVSEKKS. The span at 69–78 shows a compositional bias: basic residues; it reads FPRRRGRKSL. The sHSP domain occupies 114-232; sequence IFDNFNVNPF…KKNVQEISVE (119 aa).

This sequence belongs to the small heat shock protein (HSP20) family. As to quaternary structure, may form oligomeric structures.

Its subcellular location is the mitochondrion. The chain is 26.5 kDa heat shock protein, mitochondrial (HSP26.5) from Arabidopsis thaliana (Mouse-ear cress).